Reading from the N-terminus, the 589-residue chain is Serine/threonine-protein phosphatase 2A 65 kDa regulatory subunit A alpha isoform (589 aa).

Alanine 2 is modified (N-acetylalanine). HEAT repeat units follow at residues 8–46 (DSLY…GVER), 47–84 (TRSE…GGPE), 85–123 (YVHC…SPSD), 124–161 (LEAH…VSSA), 162–200 (VKAE…ELDN), 201–239 (VKSE…PQED), 240–278 (LEAL…GPEI), 279–321 (TKTD…RENV), 322–360 (IMSQ…GKDN), 361–399 (TIEH…GIRQ), 400–438 (LSQS…GVEF), 439–477 (FDEK…GKEW), 478–516 (AHAT…GQDI), 517–555 (TTKH…DNST), and 556–589 (LQSE…LSLA). Residues 8–399 (DSLYPIAVLI…CVNEVIGIRQ (392 aa)) are PP2A subunit B binding. Positions 47–321 (TRSELLPFLT…NLSADCRENV (275 aa)) are polyoma small and medium T antigens Binding. An SV40 small T antigen binding region spans residues 85–239 (YVHCLLPPLE…NIAQLLPQED (155 aa)). Position 280 is an N6-acetyllysine (lysine 280). Residues 400 to 589 (LSQSLLPAIV…QEALTVLSLA (190 aa)) are PP2A subunit C binding.

It belongs to the phosphatase 2A regulatory subunit A family. PP2A consists of a common heterodimeric core enzyme, composed of PPP2CA a 36 kDa catalytic subunit (subunit C) and PPP2R1A a 65 kDa constant regulatory subunit (PR65 or subunit A), that associates with a variety of regulatory subunits. Proteins that associate with the core dimer include three families of regulatory subunits B (the R2/B/PR55/B55, R3/B''/PR72/PR130/PR59 and R5/B'/B56 families), the 48 kDa variable regulatory subunit, viral proteins, and cell signaling molecules. Found in a complex with at least ARL2, PPP2CB, PPP2R1A, PPP2R2A, PPP2R5E and TBCD. Interacts with the PP2A C catalytic subunit PPP2CA. Interacts with the PP2A B subunit PPP2R2A. Interacts with the PP2A B subunit PPP2R5D. Interacts with FOXO1; the interaction dephosphorylates FOXO1 on AKT-mediated phosphorylation sites. Interacts with IPO9. Interacts with TP53 and SGO1. Interacts with PLA2G16; this interaction might decrease PP2A activity. Interacts with CTTNBP2NL. Interacts with GNA12; the interaction promotes protein phosphatase 2A activation causing dephosphorylation of MAPT. Interacts with CIP2A; this interaction stabilizes CIP2A. Interacts with PABIR1/FAM122A. Interacts with ADCY8; antagonizes interaction between ADCY8 and calmodulin. Interacts with CRTC3 (when phosphorylated at 'Ser-391'). Interacts with SPRY2. Part of the core of STRIPAK complexes composed of PP2A catalytic and scaffolding subunits, the striatins (PP2A regulatory subunits), the striatin-associated proteins MOB4, STRIP1 and STRIP2, PDCD10 and members of the STE20 kinases, such as STK24 and STK26. Component of the Integrator-PP2A (INTAC) complex, composed of the Integrator core complex and protein phosphatase 2A subunits PPP2CA and PPP2R1A. As to quaternary structure, (Microbial infection) Interacts with JC virus small t antigen; this interaction inhibits PPP2R1A activity.

The protein resides in the cytoplasm. It is found in the nucleus. The protein localises to the chromosome. It localises to the centromere. Its subcellular location is the lateral cell membrane. The protein resides in the cell projection. It is found in the dendrite. The PR65 subunit of protein phosphatase 2A serves as a scaffolding molecule to coordinate the assembly of the catalytic subunit and a variable regulatory B subunit. Upon interaction with GNA12 promotes dephosphorylation of microtubule associated protein TAU/MAPT. Required for proper chromosome segregation and for centromeric localization of SGO1 in mitosis. Together with RACK1 adapter, mediates dephosphorylation of AKT1 at 'Ser-473', preventing AKT1 activation and AKT-mTOR signaling pathway. Dephosphorylation of AKT1 is essential for regulatory T-cells (Treg) homeostasis and stability. Part of the striatin-interacting phosphatase and kinase (STRIPAK) complexes. STRIPAK complexes have critical roles in protein (de)phosphorylation and are regulators of multiple signaling pathways including Hippo, MAPK, nuclear receptor and cytoskeleton remodeling. Different types of STRIPAK complexes are involved in a variety of biological processes such as cell growth, differentiation, apoptosis, metabolism and immune regulation. Key mediator of a quality checkpoint during transcription elongation as part of the Integrator-PP2A (INTAC) complex. The INTAC complex drives premature transcription termination of transcripts that are unfavorably configured for transcriptional elongation: within the INTAC complex, acts as a scaffolding subunit for PPP2CA, which catalyzes dephosphorylation of the C-terminal domain (CTD) of Pol II subunit POLR2A/RPB1 and SUPT5H/SPT5, thereby preventing transcriptional elongation. Regulates the recruitment of the SKA complex to kinetochores. This chain is Serine/threonine-protein phosphatase 2A 65 kDa regulatory subunit A alpha isoform, found in Homo sapiens (Human).